A 309-amino-acid polypeptide reads, in one-letter code: ATP synthase gamma chain (309 aa).

Belongs to the ATPase gamma chain family. F-type ATPases have 2 components, CF(1) - the catalytic core - and CF(0) - the membrane proton channel. CF(1) has five subunits: alpha(3), beta(3), gamma(1), delta(1), epsilon(1). CF(0) has three main subunits: a, b and c.

It localises to the cell membrane. Its function is as follows. Produces ATP from ADP in the presence of a proton gradient across the membrane. The gamma chain is believed to be important in regulating ATPase activity and the flow of protons through the CF(0) complex. This is ATP synthase gamma chain from Ligilactobacillus salivarius (strain UCC118) (Lactobacillus salivarius).